The primary structure comprises 66 residues: Large ribosomal subunit protein bL35 (66 aa).

Residues 1–16 (MPKQKTHRASAKRFKR) are compositionally biased toward basic residues. The segment at 1-21 (MPKQKTHRASAKRFKRTGSGG) is disordered.

It belongs to the bacterial ribosomal protein bL35 family.

This chain is Large ribosomal subunit protein bL35, found in Streptococcus agalactiae serotype Ia (strain ATCC 27591 / A909 / CDC SS700).